The primary structure comprises 563 residues: Putative inactive polypeptide N-acetylgalactosaminyltransferase 12 (563 aa).

The Cytoplasmic segment spans residues 1–6 (MEVFAS). A helical; Signal-anchor for type II membrane protein membrane pass occupies residues 7-29 (VLNCCFKYIVLPVWIFIVLLLLH). The Lumenal segment spans residues 30-563 (RDLSSWDGLM…SVMQSANILV (534 aa)). Asn50 is a glycosylation site (N-linked (GlcNAc...) asparagine). Cys97 and Cys334 form a disulfide bridge. Positions 109 to 225 (MKPASIIMIF…NGWLSPLLDT (117 aa)) are catalytic subdomain A. Residues 280-342 (PYEVAAVRTS…PCSRVGHLQP (63 aa)) are catalytic subdomain B. 2 N-linked (GlcNAc...) asparagine glycosylation sites follow: Asn389 and Asn428. The Ricin B-type lectin domain occupies 433–549 (ASGHVKTLEF…ANGKQRWILD (117 aa)). Residues Cys446 and Cys461 are joined by a disulfide bond. Residues Asn464 and Asn469 are each glycosylated (N-linked (GlcNAc...) asparagine). 2 cysteine pairs are disulfide-bonded: Cys485–Cys499 and Cys523–Cys537. A glycan (N-linked (GlcNAc...) asparagine) is linked at Asn552.

It belongs to the glycosyltransferase 2 family. GalNAc-T subfamily.

Its subcellular location is the golgi apparatus membrane. Probable inactive glycosyltransferase. The polypeptide is Putative inactive polypeptide N-acetylgalactosaminyltransferase 12 (pgant12) (Drosophila melanogaster (Fruit fly)).